The sequence spans 165 residues: Disulfide bond formation protein B (165 aa).

Residues 1-16 (MTILNSLNQFSKGRLS) are Cytoplasmic-facing. Residues 17-33 (WLLLLLFVVFFEACALY) traverse the membrane as a helical segment. Residues 34-51 (FQHVMMLAPCVMCIYERV) lie on the Periplasmic side of the membrane. Cysteine 43 and cysteine 46 are joined by a disulfide. Residues 52 to 67 (AMMGVGVAAIVGLMAP) form a helical membrane-spanning segment. Topologically, residues 68–74 (NNPIFRW) are cytoplasmic. A helical membrane pass occupies residues 75–92 (LGLIGWGLSSYKGLLLAQ). At 93-147 (QHVDYQFNPSPFATCDLFVTFPSWRPLNQWAPWIFEAYGDCSKIVWQFLDLSMPQ) the chain is on the periplasmic side. Cysteine 107 and cysteine 133 are oxidised to a cystine. The chain crosses the membrane as a helical span at residues 148–165 (WLVVIFAGNLIALALIVI).

Belongs to the DsbB family.

It is found in the cell inner membrane. In terms of biological role, required for disulfide bond formation in some periplasmic proteins. Acts by oxidizing the DsbA protein. The polypeptide is Disulfide bond formation protein B (Vibrio alginolyticus).